The primary structure comprises 142 residues: Large ribosomal subunit protein uL11 (142 aa).

Belongs to the universal ribosomal protein uL11 family. As to quaternary structure, part of the ribosomal stalk of the 50S ribosomal subunit. Interacts with L10 and the large rRNA to form the base of the stalk. L10 forms an elongated spine to which L12 dimers bind in a sequential fashion forming a multimeric L10(L12)X complex. Post-translationally, one or more lysine residues are methylated.

Functionally, forms part of the ribosomal stalk which helps the ribosome interact with GTP-bound translation factors. The sequence is that of Large ribosomal subunit protein uL11 from Xanthomonas oryzae pv. oryzae (strain MAFF 311018).